The following is a 546-amino-acid chain: Glutamyl-tRNA(Gln) amidotransferase subunit A, chloroplastic/mitochondrial (546 aa).

Residues 21–52 (KRRRFHSSTPLFLSQPQTLASTDPPSSPPQSQ) form a disordered region. Over residues 27-43 (SSTPLFLSQPQTLASTD) the composition is skewed to polar residues. Catalysis depends on charge relay system residues Lys123 and Ser198. Ser222 acts as the Acyl-ester intermediate in catalysis.

Belongs to the amidase family. GatA subfamily. Subunit of the heterotrimeric GatCAB amidotransferase (AdT) complex, composed of A, B and C subunits.

It localises to the mitochondrion. The protein localises to the plastid. It is found in the chloroplast stroma. It carries out the reaction L-glutamyl-tRNA(Gln) + L-glutamine + ATP + H2O = L-glutaminyl-tRNA(Gln) + L-glutamate + ADP + phosphate + H(+). Allows the formation of correctly charged Gln-tRNA(Gln) through the transamidation of misacylated Glu-tRNA(Gln) in chloroplasts and mitochondria. The reaction takes place in the presence of glutamine and ATP through an activated gamma-phospho-Glu-tRNA(Gln). The sequence is that of Glutamyl-tRNA(Gln) amidotransferase subunit A, chloroplastic/mitochondrial from Vitis vinifera (Grape).